The following is a 98-amino-acid chain: NADH-ubiquinone oxidoreductase chain 4L (98 aa).

3 helical membrane-spanning segments follow: residues M1 to M21, S29 to L49, and I61 to V81.

Belongs to the complex I subunit 4L family. In terms of assembly, core subunit of respiratory chain NADH dehydrogenase (Complex I) which is composed of 45 different subunits.

The protein resides in the mitochondrion inner membrane. It carries out the reaction a ubiquinone + NADH + 5 H(+)(in) = a ubiquinol + NAD(+) + 4 H(+)(out). Core subunit of the mitochondrial membrane respiratory chain NADH dehydrogenase (Complex I) which catalyzes electron transfer from NADH through the respiratory chain, using ubiquinone as an electron acceptor. Part of the enzyme membrane arm which is embedded in the lipid bilayer and involved in proton translocation. This Zalophus californianus (California sealion) protein is NADH-ubiquinone oxidoreductase chain 4L (MT-ND4L).